Reading from the N-terminus, the 252-residue chain is MTKASATFGFKDVDASAKAGLVRGVFDRVAKNYDLMNDVMSGGVHRLWKDAVAARLNPQPGEIIIDCAGGTGDMARRFAKMTRAAQERRGGPDALINIIDYNAEMIGAGIEKGGAPEITWTVGDAQRLPLPDAYADAYVISFGIRNVTDIDAALREARRVLKPGGRFLCLEFSKPVTEALSKAYDAYSFKLIPQFGEWLAKDRDAYQYLVESIRRFPDQKTFAGMMENAGFKRVTITNFTGGVAAMHQGWAL.

S-adenosyl-L-methionine-binding positions include Thr-71, Asp-100, 124 to 125 (DA), and Ser-141.

This sequence belongs to the class I-like SAM-binding methyltransferase superfamily. MenG/UbiE family.

The catalysed reaction is a 2-demethylmenaquinol + S-adenosyl-L-methionine = a menaquinol + S-adenosyl-L-homocysteine + H(+). The enzyme catalyses a 2-methoxy-6-(all-trans-polyprenyl)benzene-1,4-diol + S-adenosyl-L-methionine = a 5-methoxy-2-methyl-3-(all-trans-polyprenyl)benzene-1,4-diol + S-adenosyl-L-homocysteine + H(+). It functions in the pathway quinol/quinone metabolism; menaquinone biosynthesis; menaquinol from 1,4-dihydroxy-2-naphthoate: step 2/2. Its pathway is cofactor biosynthesis; ubiquinone biosynthesis. Methyltransferase required for the conversion of demethylmenaquinol (DMKH2) to menaquinol (MKH2) and the conversion of 2-polyprenyl-6-methoxy-1,4-benzoquinol (DDMQH2) to 2-polyprenyl-3-methyl-6-methoxy-1,4-benzoquinol (DMQH2). The chain is Ubiquinone/menaquinone biosynthesis C-methyltransferase UbiE from Caulobacter sp. (strain K31).